Reading from the N-terminus, the 450-residue chain is Chromosomal replication initiator protein DnaA (450 aa).

The interval 1 to 77 (MTENEQIFWN…EVYNAQIAVD (77 aa)) is domain I, interacts with DnaA modulators. The domain II stretch occupies residues 77–109 (DYVYEDDLMIEQQHQGQQGYTEQAFQQLPAVQS). Residues 110–328 (DLNPKYSFDN…GALKDISLVA (219 aa)) form a domain III, AAA+ region region. ATP contacts are provided by Gly154, Gly156, Lys157, and Thr158. Positions 329–450 (NFKQIDTITV…EIETIKNKIK (122 aa)) are domain IV, binds dsDNA.

This sequence belongs to the DnaA family. Oligomerizes as a right-handed, spiral filament on DNA at oriC.

Its subcellular location is the cytoplasm. In terms of biological role, plays an essential role in the initiation and regulation of chromosomal replication. ATP-DnaA binds to the origin of replication (oriC) to initiate formation of the DNA replication initiation complex once per cell cycle. Binds the DnaA box (a 9 base pair repeat at the origin) and separates the double-stranded (ds)DNA. Forms a right-handed helical filament on oriC DNA; dsDNA binds to the exterior of the filament while single-stranded (ss)DNA is stabiized in the filament's interior. The ATP-DnaA-oriC complex binds and stabilizes one strand of the AT-rich DNA unwinding element (DUE), permitting loading of DNA polymerase. After initiation quickly degrades to an ADP-DnaA complex that is not apt for DNA replication. Binds acidic phospholipids. This is Chromosomal replication initiator protein DnaA from Streptococcus equi subsp. equi (strain 4047).